The primary structure comprises 300 residues: MEGNIVSGKAVADNITNILATCISDLKVQHNLTPCLIVVLVGDDPASQLYVRNKQRKAEMLGLRSETMLLPSTISESSLIEKIHQLNNDDSVHGILVQLPVPRHIDKNLIINTIDPKKDVDGFHNENVGRLFTGQKKNCLVPCTPQGCLYLIKTITRNLSGSDAVVIGRSNIVGKPMACLLLGENCTVTTVHSATRDLPDYCRRADILVAAVGIPRFVKYSWVKHGAIVIDVGINSIEEDGVKKFVGDVDFAEVNKIASAITPVPGGVGPMTIAFLMVNTIIAACNQSGIHGFLEKYLDL.

Residues 168–170, S193, and I234 each bind NADP(+); that span reads GRS.

The protein belongs to the tetrahydrofolate dehydrogenase/cyclohydrolase family. Homodimer.

The enzyme catalyses (6R)-5,10-methylene-5,6,7,8-tetrahydrofolate + NADP(+) = (6R)-5,10-methenyltetrahydrofolate + NADPH. It catalyses the reaction (6R)-5,10-methenyltetrahydrofolate + H2O = (6R)-10-formyltetrahydrofolate + H(+). It functions in the pathway one-carbon metabolism; tetrahydrofolate interconversion. In terms of biological role, catalyzes the oxidation of 5,10-methylenetetrahydrofolate to 5,10-methenyltetrahydrofolate and then the hydrolysis of 5,10-methenyltetrahydrofolate to 10-formyltetrahydrofolate. This chain is Bifunctional protein FolD, found in Ehrlichia ruminantium (strain Gardel).